The sequence spans 321 residues: tRNA U34 carboxymethyltransferase (321 aa).

Carboxy-S-adenosyl-L-methionine-binding positions include Lys-90, Trp-104, Lys-109, Gly-129, Asp-151–Thr-153, Ile-180–Glu-181, Met-195, Tyr-199, and Arg-314.

This sequence belongs to the class I-like SAM-binding methyltransferase superfamily. CmoB family. In terms of assembly, homotetramer.

The catalysed reaction is carboxy-S-adenosyl-L-methionine + 5-hydroxyuridine(34) in tRNA = 5-carboxymethoxyuridine(34) in tRNA + S-adenosyl-L-homocysteine + H(+). Its function is as follows. Catalyzes carboxymethyl transfer from carboxy-S-adenosyl-L-methionine (Cx-SAM) to 5-hydroxyuridine (ho5U) to form 5-carboxymethoxyuridine (cmo5U) at position 34 in tRNAs. The protein is tRNA U34 carboxymethyltransferase of Histophilus somni (strain 2336) (Haemophilus somnus).